The chain runs to 84 residues: Large ribosomal subunit protein bL31B (84 aa).

It belongs to the bacterial ribosomal protein bL31 family. Type B subfamily. As to quaternary structure, part of the 50S ribosomal subunit.

The sequence is that of Large ribosomal subunit protein bL31B from Parabacteroides distasonis (strain ATCC 8503 / DSM 20701 / CIP 104284 / JCM 5825 / NCTC 11152).